The primary structure comprises 214 residues: Thymidylate kinase (214 aa).

10–17 (GGEGAGKS) is a binding site for ATP.

It belongs to the thymidylate kinase family.

The enzyme catalyses dTMP + ATP = dTDP + ADP. Its function is as follows. Phosphorylation of dTMP to form dTDP in both de novo and salvage pathways of dTTP synthesis. This is Thymidylate kinase from Brucella suis (strain ATCC 23445 / NCTC 10510).